The chain runs to 641 residues: SUMO-activating enzyme subunit 2-B (641 aa).

ATP-binding positions include 24–29 (GAGGIG), aspartate 48, 56–59 (NLNR), lysine 72, 95–96 (SI), and 117–122 (DNNAAR). Cysteine 158 and cysteine 161 together coordinate Zn(2+). Cysteine 173 functions as the Glycyl thioester intermediate in the catalytic mechanism. Residues cysteine 439 and cysteine 442 each contribute to the Zn(2+) site. Positions 546–641 (GDVPEKGPQK…EEDDDIIALD (96 aa)) are disordered. Positions 548 to 561 (VPEKGPQKPPEESV) are enriched in basic and acidic residues. The span at 562–579 (KNITNGSDDGAQPSTSKA) shows a compositional bias: polar residues. Composition is skewed to acidic residues over residues 582–594 (QDDV…DEES) and 630–641 (PVEEDDDIIALD).

Belongs to the ubiquitin-activating E1 family. In terms of assembly, heterodimer of sae1 and uba2/sae2. The heterodimer corresponds to the two domains that are encoded on a single polypeptide chain in ubiquitin-activating enzyme E1. Interacts with ube2i.

It localises to the nucleus. It participates in protein modification; protein sumoylation. In terms of biological role, the heterodimer acts as an E1 ligase for sumo1, sumo2, and sumo3. It mediates ATP-dependent activation of sumo proteins followed by formation of a thioester bond between a sumo protein and a conserved active site cysteine residue on uba2/sae2. In Xenopus laevis (African clawed frog), this protein is SUMO-activating enzyme subunit 2-B (uba2-b).